We begin with the raw amino-acid sequence, 1024 residues long: MTMITDSLAVVLQRRDWENPGVTQLNRLAAHPPFASWRNSEEARTDRPSQQLRSLNGEWRFAWFPAPEAVPESWLECDLPEADTVVVPSNWQMHGYDAPIYTNVTYPITVNPPFVPTENPTSCYSLTFNVDESWLQEGQTRIIFDGVNSAFHLWCNGRWVGYGQDSRLPSEFDLSAFLRAGKNRLAVMVLRWSDGSYLEDQDMWRMSGIFRDVSLLHKPTTQISDFHVATRFNDDFSRAVLEAEVQMCGELRDYLRVTVSLWQGETQVASGTAPFGGEIIDERGGYADRVTLRLNVENPKLWSAEIPNLYRAVVELHTADGTLIEAEACDVGFREVRIENGLLLLNGKPLLIRGVNRHEHHPLHGQVMDEQTMVQDILLMKQNNFNAVRCSHYPNHPLWYTLCDRYGLYVVDEANIETHGMVPMNRLTDDPRWLPAMSERVTRMVQRDRNHPSVIIWSLGNESGHGANHDALYRWIKSVDPSRPVQYEGGGADTTATDIICPMYARVDEDQPFPAVPKWSIKKWLSLPGETRPLILCEYAHAMGNSLGGFAKYWQAFRQYPRLQGGFVWDWVDQSLIKYDENGNPWSAYGGDFGDTPNDRQFCMNGLVFADRTPHPALTEAKHQQQFFQFRLSGQTIEVTSEYLFRHSDNELLHWMVALDGKPLASGEVPLDVAPQGKQLIELPELPQPESAGQLWLTVRVVQPNATAWSEAGHISAWQQWRLAENLSVTLPAASHAIPHLTTSEMDFCIELGNKRWQFNRQSGFLSQMWIGDKKQLLTPLRDQFTRAPLDNDIGVSEATRIDPNAWVERWKAAGHYQAEAALLQCTADTLADAVLITTAHAWQHQGKTLFISRKTYRIDGSGQMAITVDVEVASDTPHPARIGLNCQLAQVAERVNWLGLGPQENYPDRLTAACFDRWDLPLSDMYTPYVFPSENGLRCGTRELNYGPHQWRGDFQFNISRYSQQQLMETSHRHLLHAEEGTWLNIDGFHMGIGGDDSWSPSVSAEFQLSAGRYHYQLVWCQK.

Substrate-binding residues include asparagine 103 and aspartate 202. Residue aspartate 202 participates in Na(+) binding. Residues glutamate 417, histidine 419, and glutamate 462 each contribute to the Mg(2+) site. Substrate contacts are provided by residues glutamate 462 and 538–541 (EYAH). Glutamate 462 acts as the Proton donor in catalysis. The active-site Nucleophile is glutamate 538. Asparagine 598 is a binding site for Mg(2+). Residues phenylalanine 602 and asparagine 605 each coordinate Na(+). Residues asparagine 605 and tryptophan 1000 each contribute to the substrate site.

Belongs to the glycosyl hydrolase 2 family. Homotetramer. Requires Mg(2+) as cofactor. The cofactor is Na(+).

It catalyses the reaction Hydrolysis of terminal non-reducing beta-D-galactose residues in beta-D-galactosides.. The polypeptide is Beta-galactosidase (Escherichia coli (strain ATCC 8739 / DSM 1576 / NBRC 3972 / NCIMB 8545 / WDCM 00012 / Crooks)).